Consider the following 189-residue polypeptide: Probable nicotinate-nucleotide adenylyltransferase (189 aa).

It belongs to the NadD family.

It carries out the reaction nicotinate beta-D-ribonucleotide + ATP + H(+) = deamido-NAD(+) + diphosphate. The protein operates within cofactor biosynthesis; NAD(+) biosynthesis; deamido-NAD(+) from nicotinate D-ribonucleotide: step 1/1. Its function is as follows. Catalyzes the reversible adenylation of nicotinate mononucleotide (NaMN) to nicotinic acid adenine dinucleotide (NaAD). In Hydrogenobaculum sp. (strain Y04AAS1), this protein is Probable nicotinate-nucleotide adenylyltransferase.